Consider the following 277-residue polypeptide: Putative serine/threonine-protein kinase PRKY (277 aa).

Residues 1–12 (MEAPGPAQAAAA) show a composition bias toward low complexity. The tract at residues 1-40 (MEAPGPAQAAAAESNSREVTEDAADWAPALCPSPEARSPE) is disordered. A Protein kinase domain is found at 49–277 (CDALVTMGTG…DFHVKTGRMM (229 aa)). Residues 55–63 (MGTGTFGRV) and K78 each bind ATP. Residue D172 is the Proton acceptor of the active site. The residue at position 203 (T203) is a Phosphothreonine.

It belongs to the protein kinase superfamily. AGC Ser/Thr protein kinase family. cAMP subfamily. As to expression, ubiquitous.

The catalysed reaction is L-seryl-[protein] + ATP = O-phospho-L-seryl-[protein] + ADP + H(+). The enzyme catalyses L-threonyl-[protein] + ATP = O-phospho-L-threonyl-[protein] + ADP + H(+). In Homo sapiens (Human), this protein is Putative serine/threonine-protein kinase PRKY (PRKY).